Reading from the N-terminus, the 491-residue chain is Probable protein phosphatase 2C 52 (491 aa).

Over residues 1–11 (MVYDGAVKDQE) the composition is skewed to basic and acidic residues. The interval 1 to 211 (MVYDGAVKDQ…REREKERERV (211 aa)) is disordered. Residues 12–54 (SSANPASASAALSEASAAASEVTAAAAAGAGAGAAEEGAAVSG) are compositionally biased toward low complexity. The segment covering 66–78 (GVRHPLKHRRFRA) has biased composition (basic residues). A compositionally biased stretch (acidic residues) spans 95-105 (VADEEASEVEQ). Residues 187–211 (VEEKKHKDQENKHKEREREKERERV) are compositionally biased toward basic and acidic residues. One can recognise a PPM-type phosphatase domain in the interval 229 to 475 (SCGYSSFRGK…DNITCIVVKF (247 aa)). Positions 265, 266, 427, and 466 each coordinate Mn(2+).

The protein belongs to the PP2C family. Mg(2+) is required as a cofactor. Mn(2+) serves as cofactor.

It carries out the reaction O-phospho-L-seryl-[protein] + H2O = L-seryl-[protein] + phosphate. The enzyme catalyses O-phospho-L-threonyl-[protein] + H2O = L-threonyl-[protein] + phosphate. This chain is Probable protein phosphatase 2C 52, found in Oryza sativa subsp. japonica (Rice).